The sequence spans 209 residues: Large ribosomal subunit protein uL3 (209 aa).

Positions arginine 141–glycine 163 are disordered.

The protein belongs to the universal ribosomal protein uL3 family. In terms of assembly, part of the 50S ribosomal subunit. Forms a cluster with proteins L14 and L19.

In terms of biological role, one of the primary rRNA binding proteins, it binds directly near the 3'-end of the 23S rRNA, where it nucleates assembly of the 50S subunit. The polypeptide is Large ribosomal subunit protein uL3 (Clostridium botulinum (strain Langeland / NCTC 10281 / Type F)).